A 248-amino-acid polypeptide reads, in one-letter code: Tryptophan synthase alpha chain (248 aa).

Catalysis depends on proton acceptor residues Glu-36 and Asp-47.

It belongs to the TrpA family. In terms of assembly, tetramer of two alpha and two beta chains.

It catalyses the reaction (1S,2R)-1-C-(indol-3-yl)glycerol 3-phosphate + L-serine = D-glyceraldehyde 3-phosphate + L-tryptophan + H2O. The protein operates within amino-acid biosynthesis; L-tryptophan biosynthesis; L-tryptophan from chorismate: step 5/5. Its function is as follows. The alpha subunit is responsible for the aldol cleavage of indoleglycerol phosphate to indole and glyceraldehyde 3-phosphate. The sequence is that of Tryptophan synthase alpha chain from Archaeoglobus fulgidus (strain ATCC 49558 / DSM 4304 / JCM 9628 / NBRC 100126 / VC-16).